Here is a 170-residue protein sequence, read N- to C-terminus: tRNA-splicing endonuclease (170 aa).

Residues tyrosine 106, histidine 116, and lysine 147 contribute to the active site.

Belongs to the tRNA-intron endonuclease family. Archaeal short subfamily. In terms of assembly, homotetramer; although the tetramer contains four active sites, only two participate in the cleavage. Therefore, it should be considered as a dimer of dimers.

It carries out the reaction pretRNA = a 3'-half-tRNA molecule with a 5'-OH end + a 5'-half-tRNA molecule with a 2',3'-cyclic phosphate end + an intron with a 2',3'-cyclic phosphate and a 5'-hydroxyl terminus.. In terms of biological role, endonuclease that removes tRNA introns. Cleaves pre-tRNA at the 5'- and 3'-splice sites to release the intron. The products are an intron and two tRNA half-molecules bearing 2',3' cyclic phosphate and 5'-OH termini. Recognizes a pseudosymmetric substrate in which 2 bulged loops of 3 bases are separated by a stem of 4 bp. The polypeptide is tRNA-splicing endonuclease (Methanothermobacter thermautotrophicus (strain ATCC 29096 / DSM 1053 / JCM 10044 / NBRC 100330 / Delta H) (Methanobacterium thermoautotrophicum)).